The primary structure comprises 922 residues: Isoleucine--tRNA ligase (922 aa).

A 'HIGH' region motif is present at residues 57–67 (PYANGDIHLGH). Glu-553 provides a ligand contact to L-isoleucyl-5'-AMP. Residues 594 to 598 (KMSKS) carry the 'KMSKS' region motif. Lys-597 is an ATP binding site. The Zn(2+) site is built by Cys-892, Cys-895, Cys-912, and Cys-915.

It belongs to the class-I aminoacyl-tRNA synthetase family. IleS type 1 subfamily. In terms of assembly, monomer. Requires Zn(2+) as cofactor.

The protein localises to the cytoplasm. It carries out the reaction tRNA(Ile) + L-isoleucine + ATP = L-isoleucyl-tRNA(Ile) + AMP + diphosphate. Catalyzes the attachment of isoleucine to tRNA(Ile). As IleRS can inadvertently accommodate and process structurally similar amino acids such as valine, to avoid such errors it has two additional distinct tRNA(Ile)-dependent editing activities. One activity is designated as 'pretransfer' editing and involves the hydrolysis of activated Val-AMP. The other activity is designated 'posttransfer' editing and involves deacylation of mischarged Val-tRNA(Ile). This is Isoleucine--tRNA ligase from Desulfitobacterium hafniense (strain DSM 10664 / DCB-2).